A 2155-amino-acid polypeptide reads, in one-letter code: Conidial pigment polyketide synthase PfmaE (2155 aa).

Positions 8–245 are N-terminal acylcarrier protein transacylase domain (SAT); that stretch reads LLFGDQSLDT…TAIPVYGPYH (238 aa). In terms of domain architecture, Ketosynthase family 3 (KS3) spans 381–813; sequence KCKLAIVGMA…GGNTGLLLED (433 aa). Residues Cys553, His688, and His731 each act as for beta-ketoacyl synthase activity in the active site. Positions 910 to 1231 are malonyl-CoA:ACP transacylase (MAT) domain; the sequence is AFMFTGQGSH…LCTLHSAGLN (322 aa). Ser1001 functions as the For acyl/malonyl transferase activity in the catalytic mechanism. The interval 1293–1608 is product template (PT) domain; sequence TTTVQKVVRE…PRKVLNVVLP (316 aa). An N-terminal hotdog fold region spans residues 1297 to 1428; it reads QKVVREEVKG…CKVFFGDNEE (132 aa). A PKS/mFAS DH domain is found at 1297–1604; it reads QKVVREEVKG…FQAIPRKVLN (308 aa). Catalysis depends on His1329, which acts as the Proton acceptor; for dehydratase activity. A C-terminal hotdog fold region spans residues 1455-1604; that stretch reads DASKIGRGLA…FQAIPRKVLN (150 aa). The active-site Proton donor; for dehydratase activity is the Asp1516. Carrier domains follow at residues 1653–1730 and 1779–1856; these read LTKN…AQFE and GNVS…GIED. Ser1690 carries the post-translational modification O-(pantetheine 4'-phosphoryl)serine. Positions 1738 to 1782 are disordered; the sequence is EENAHSSASSDSADMETESNFTTPSDDSEKDEVKGDAPAADGNVS. At Ser1816 the chain carries O-(pantetheine 4'-phosphoryl)serine. Positions 1855-1892 are disordered; that stretch reads EDKPKRAAPKSAKQEPAKPEPKVQGEAKAHTNPVDNYP. A compositionally biased stretch (basic and acidic residues) spans 1866-1883; the sequence is AKQEPAKPEPKVQGEAKA. The interval 1911 to 2041 is thioesterase (TE) domain; it reads QLFMIPDGSG…LGEGDDAEAK (131 aa).

It functions in the pathway pigment biosynthesis; melanin biosynthesis. Its function is as follows. Non-reducing polyketide synthase; part of the gene cluster that mediates the biosynthesis of dihydroxynaphthalene (DHN)-melanin, a bluish-green pigment forming a dark layer in the conidial wall that protects the conidia from UV radiations. The first step of the pathway is the production of the pentaketide 1,3,6,8-tetrahydroxynaphthalene (1,3,6,8-THN or T4HN) by the polyketide synthase PfmaE though condensation of acetyl-CoA with malonyl-CoA. T4HN is not stable and easily oxidizes into the stable form flaviolin. T4HN is also substrate of the hydroxynaphthalene reductase PfmaG to yield scytalone. The scytalone dehydratase PfmaJ then reduces scytalone to 1,3,8-THN. 1,3,8-THN is then substrate of the hydroxynaphthalene reductase PfmaI to yield vermelone. Vermelone is further converted by the multicopper oxidase PfmaD to 1,8-DHN. Finally the laccase PFICI_06862 transforms 1,8-DHN to DHN-melanin. The roles of the 5-oxoprolinase PfmaA and the proline iminopeptidase PfmaB within the cluster have not been elucidated yet. The protein is Conidial pigment polyketide synthase PfmaE of Pestalotiopsis fici (strain W106-1 / CGMCC3.15140).